The primary structure comprises 465 residues: GTPase Der (465 aa).

EngA-type G domains lie at 3–167 and 179–352; these read PLVA…PEEG and VRIA…ASAT. Residues 9-16, 57-61, 119-122, 185-192, 232-236, and 297-300 each bind GTP; these read GRPNVGKS, DTGGI, NKID, DTAGL, and NKWD. The KH-like domain occupies 353–437; sequence HEFSTSEVNQ…PVRFIFREGA (85 aa).

It belongs to the TRAFAC class TrmE-Era-EngA-EngB-Septin-like GTPase superfamily. EngA (Der) GTPase family. Associates with the 50S ribosomal subunit.

GTPase that plays an essential role in the late steps of ribosome biogenesis. In Xanthomonas campestris pv. campestris (strain 8004), this protein is GTPase Der.